Reading from the N-terminus, the 166-residue chain is Large ribosomal subunit protein uL10 (166 aa).

It belongs to the universal ribosomal protein uL10 family. In terms of assembly, part of the ribosomal stalk of the 50S ribosomal subunit. The N-terminus interacts with L11 and the large rRNA to form the base of the stalk. The C-terminus forms an elongated spine to which L12 dimers bind in a sequential fashion forming a multimeric L10(L12)X complex.

Functionally, forms part of the ribosomal stalk, playing a central role in the interaction of the ribosome with GTP-bound translation factors. In Shewanella woodyi (strain ATCC 51908 / MS32), this protein is Large ribosomal subunit protein uL10.